Reading from the N-terminus, the 281-residue chain is Large ribosomal subunit protein uL2 (281 aa).

A compositionally biased stretch (basic and acidic residues) spans 27 to 38 (DSPEKSLTEPLK). Disordered stretches follow at residues 27–59 (DSPEKSLTEPLKRSGGRNVHGHITRRHQGGGHK) and 225–281 (AMNP…ARSQ). Basic residues predominate over residues 45-59 (VHGHITRRHQGGGHK).

It belongs to the universal ribosomal protein uL2 family. In terms of assembly, part of the 50S ribosomal subunit. Forms a bridge to the 30S subunit in the 70S ribosome.

In terms of biological role, one of the primary rRNA binding proteins. Required for association of the 30S and 50S subunits to form the 70S ribosome, for tRNA binding and peptide bond formation. It has been suggested to have peptidyltransferase activity; this is somewhat controversial. Makes several contacts with the 16S rRNA in the 70S ribosome. The protein is Large ribosomal subunit protein uL2 of Myxococcus xanthus (strain DK1622).